A 385-amino-acid polypeptide reads, in one-letter code: Prophage integrase IntS (385 aa).

In terms of domain architecture, Core-binding (CB) spans 91-172 (NSFSAIYKEW…RCGEVFRYAI (82 aa)). In terms of domain architecture, Tyr recombinase spans 195-373 (KNFPFLPADQ…QYLDKRREMM (179 aa)). Residues arginine 234, lysine 261, histidine 324, arginine 327, and histidine 350 contribute to the active site. Catalysis depends on tyrosine 360, which acts as the O-(3'-phospho-DNA)-tyrosine intermediate.

Belongs to the 'phage' integrase family.

In terms of biological role, integrase is necessary for integration of the phage into the host genome by site-specific recombination. In conjunction with excisionase, integrase is also necessary for excision of the prophage from the host genome. The polypeptide is Prophage integrase IntS (intS) (Escherichia coli (strain K12)).